Reading from the N-terminus, the 602-residue chain is Myotubularin (602 aa).

The interval 1 to 32 is disordered; sequence MASNSTPKYNSNSLENSLRRSPGDGMNHEQND. A compositionally biased stretch (basic and acidic residues) spans 17–31; sequence SLRRSPGDGMNHEQN. The 69-residue stretch at 28–96 folds into the GRAM domain; it reads HEQNDEIPCL…GVIARIEKMG (69 aa). The 376-residue stretch at 162–537 folds into the Myotubularin phosphatase domain; that stretch reads GWAVYDAMTE…RHLELWVNYY (376 aa). Positions 287, 312, and 313 each coordinate a 1,2-diacyl-sn-glycero-3-phospho-(1D-myo-inositol-3,5-bisphosphate). A 1,2-diacyl-sn-glycero-3-phospho-(1D-myo-inositol-3-phosphate)-binding residues include Asn-287, Asn-312, and Ile-313. The active-site Phosphocysteine intermediate is the Cys-374. The a 1,2-diacyl-sn-glycero-3-phospho-(1D-myo-inositol-3,5-bisphosphate) site is built by Ser-375, Asp-376, Gly-377, Trp-378, Asp-379, Arg-380, Lys-416, and Arg-420. A 1,2-diacyl-sn-glycero-3-phospho-(1D-myo-inositol-3-phosphate)-binding residues include Ser-375, Asp-376, Gly-377, Trp-378, Asp-379, and Arg-380. Position 420 (Arg-420) interacts with a 1,2-diacyl-sn-glycero-3-phospho-(1D-myo-inositol-3-phosphate). Residues 574 to 602 are disordered; sequence QITNSPKMNSSTTSPSSPSQIMPQVHTPF. A compositionally biased stretch (low complexity) spans 583 to 592; it reads SSTTSPSSPS.

The protein belongs to the protein-tyrosine phosphatase family. Non-receptor class myotubularin subfamily.

The protein resides in the cytoplasm. The protein localises to the cell membrane. It is found in the cell projection. Its subcellular location is the filopodium. It localises to the ruffle. The protein resides in the late endosome. The protein localises to the myofibril. It is found in the sarcomere. The catalysed reaction is a 1,2-diacyl-sn-glycero-3-phospho-(1D-myo-inositol-3-phosphate) + H2O = a 1,2-diacyl-sn-glycero-3-phospho-(1D-myo-inositol) + phosphate. The enzyme catalyses a 1,2-diacyl-sn-glycero-3-phospho-(1D-myo-inositol-3,5-bisphosphate) + H2O = a 1,2-diacyl-sn-glycero-3-phospho-(1D-myo-inositol-5-phosphate) + phosphate. It catalyses the reaction 1,2-dioctanoyl-sn-glycero-3-phospho-(1-D-myo-inositol-3-phosphate) + H2O = 1,2-dioctanoyl-sn-glycero-3-phospho-(1D-myo-inositol) + phosphate. It carries out the reaction 1,2-dioctanoyl-sn-glycero-3-phospho-(1D-myo-inositol-3,5-bisphosphate) + H2O = 1,2-dioctanoyl-sn-glycero-3-phospho-(1D-myo-inositol-5-phosphate) + phosphate. The catalysed reaction is 1,2-dihexadecanoyl-sn-glycero-3-phospho-(1D-myo-inositol-3,5-phosphate) + H2O = 1,2-dihexadecanoyl-sn-glycero-3-phospho-(1D-myo-inositol-5-phosphate) + phosphate. Functionally, lipid phosphatase which dephosphorylates phosphatidylinositol 3-monophosphate (PI3P) and phosphatidylinositol 3,5-bisphosphate (PI(3,5)P2). In Xenopus tropicalis (Western clawed frog), this protein is Myotubularin (mtm1).